The chain runs to 624 residues: MSPSAAVLIPLAAAVLLRPVVGQTQCGGNLYTPGTLNFTLECYNAFQDCVAQFEANASQVDCNDGKGNLFMQQQANLGASPGSQNNDAIIAFQDIRDLCLLSGSTTATWGYSDNQWYWAAAEDACYTNDPTRTDVVKTHPAPFCIQNRDSSLPECYPQPDATPPGGPLKVIKTAKTRNGFKSSARGWNTYGVQALVNGSQVVPSFAGQSGLFYTQKFVETQCGVLARPEFKKAGYDLCSLDSGWQATTAVDQHGRIIYNTTRFNLPELASWLHKRDLKLGVYITPGVPCLAHNQTILGTNIKIKDVLNGNNDQINCDFDFRKDGVQQWHDSVVAQWASWGVDMLKLDFLTPGSPSNGANLACDSSDAVRAYQKAIKKSGRKIRLDISWKLCRNETWLPIWSDLAESMRTDQDLDNYGTNTLMAWQVGQRAIENYRQYIGLQAQRNVPLTIYPDMDALFTVNPEHLAGVNDTIRYTVQNHWLGAGANLIIGGDMEQVDALGLKLTTSKQSIDAADFFAKYPMQPRNPGTGSNAAKQLQAWIGGPSDDHEAYVLIVNYGPDLGNGGFSTKLYGKQKVTVSLKDLGISGSAWTFTDIWSGKSSRVTGSYSAWLTEGESQLLRLKRTH.

Residues 1–22 (MSPSAAVLIPLAAAVLLRPVVG) form the signal peptide. N-linked (GlcNAc...) asparagine glycosylation is found at Asn37, Asn56, Asn197, Asn259, and Asn293. Residue Asp347 is the Nucleophile of the active site. An N-linked (GlcNAc...) asparagine glycan is attached at Asn393. Catalysis depends on Asp412, which acts as the Proton donor. The N-linked (GlcNAc...) asparagine glycan is linked to Asn469.

This sequence belongs to the glycosyl hydrolase 27 family.

Its subcellular location is the secreted. It catalyses the reaction Hydrolysis of terminal, non-reducing alpha-D-galactose residues in alpha-D-galactosides, including galactose oligosaccharides, galactomannans and galactolipids.. Functionally, alpha-galactosidase involved in the degradation of simple oligosaccharides like melibiose, raffinose and stachyose, and of polymeric galacto(gluco)mannans. The chain is Alpha-galactosidase 3 (agl3) from Hypocrea jecorina (Trichoderma reesei).